A 943-amino-acid polypeptide reads, in one-letter code: Tyrosine-protein kinase transmembrane receptor ROR2 (943 aa).

An N-terminal signal peptide occupies residues 1–33 (MARGSALPRRPLLCIPAVWAAAALLLSVSRTSG). Over 34–403 (EVEVLDPNDP…CSPRDSSKMG (370 aa)) the chain is Extracellular. The Ig-like C2-type domain occupies 55–145 (PTLKGYFLNF…VATNGMKTIT (91 aa)). An N-linked (GlcNAc...) asparagine glycan is attached at asparagine 70. 9 disulfide bridges follow: cysteine 83–cysteine 135, cysteine 174–cysteine 239, cysteine 182–cysteine 232, cysteine 223–cysteine 264, cysteine 252–cysteine 300, cysteine 256–cysteine 286, cysteine 316–cysteine 394, cysteine 337–cysteine 377, and cysteine 365–cysteine 389. One can recognise an FZ domain in the interval 169–303 (HEDGFCQPYR…SPDAANCMRI (135 aa)). Asparagine 188 is a glycosylation site (N-linked (GlcNAc...) asparagine). The 79-residue stretch at 316–394 (CYNGSGMDYR…RMELCDVPSC (79 aa)) folds into the Kringle domain. Residue asparagine 318 is glycosylated (N-linked (GlcNAc...) asparagine). A helical transmembrane segment spans residues 404 to 424 (ILYILVPSIAIPLVIACLFFL). Residues 425-943 (VCMCRNKQKA…VDEAQVQLEA (519 aa)) are Cytoplasmic-facing. A sulfoserine; partial mark is found at serine 469 and serine 471. In terms of domain architecture, Protein kinase spans 473–746 (VRFMEELGED…PRFKDIHSRL (274 aa)). Residues 479–487 (LGEDRFGKV) and lysine 507 contribute to the ATP site. Aspartate 615 (proton acceptor) is an active-site residue. Tyrosine 646 is subject to Phosphotyrosine; by autocatalysis. 2 disordered regions span residues 757–796 (SSAQ…APPF) and 850–931 (QVPP…DCDT). Low complexity-rich tracts occupy residues 765-791 (SNTT…GPKQ) and 857-872 (PKPS…TSTG). An Asymmetric dimethylarginine modification is found at arginine 785. The span at 873–883 (YVTTAPSNTSM) shows a compositional bias: polar residues.

Belongs to the protein kinase superfamily. Tyr protein kinase family. ROR subfamily. In terms of assembly, homodimer; promotes osteogenesis. Binds YWHAB. Interacts with WTIP. Interacts with ROR2. Requires Mg(2+) as cofactor.

It localises to the cell membrane. It catalyses the reaction L-tyrosyl-[protein] + ATP = O-phospho-L-tyrosyl-[protein] + ADP + H(+). In terms of biological role, tyrosine-protein kinase receptor which may be involved in the early formation of the chondrocytes. It seems to be required for cartilage and growth plate development. Phosphorylates YWHAB, leading to induction of osteogenesis and bone formation. In contrast, has also been shown to have very little tyrosine kinase activity in vitro. May act as a receptor for wnt ligand WNT5A which may result in the inhibition of WNT3A-mediated signaling. This chain is Tyrosine-protein kinase transmembrane receptor ROR2 (ROR2), found in Homo sapiens (Human).